A 292-amino-acid chain; its full sequence is AhcY transcriptional activator HvrB (292 aa).

The 58-residue stretch at 10 to 67 (PPLTALRAFAATASEGGFSAAARKLNVTHAAIAQQVRALEADLDVPLVWRDGKHLHLT) folds into the HTH lysR-type domain. Residues 27–46 (FSAAARKLNVTHAAIAQQVR) constitute a DNA-binding region (H-T-H motif).

It belongs to the LysR transcriptional regulatory family.

Functions as a low-light activator of ahcY expression (gene for S-adenosyl-L-homocysteine hydrolase) and as a high-light activator of an uncharacterized 21.6 kDa protein in the ahcY-hvrB intergenic region (orf5). It is also a negative regulator of its own expression. The sequence is that of AhcY transcriptional activator HvrB (hvrB) from Rhodobacter capsulatus (strain ATCC BAA-309 / NBRC 16581 / SB1003).